Here is a 366-residue protein sequence, read N- to C-terminus: MSKRIRLGIVGLSADPSHCTNYIHKIPLTTTPLKEKYEITAVSMSSPEKAEAAAIAHGLPRERGYHSVESLAKDPDVDLVVVSVKVPRRAELAMAAIEAGKDVYVEWPFASNLAAAEALAQRARERQVKSMVGLPTRLAPQVLKMKEILRSGSLGRILATNLLVTDDLFLKFHADKRHSHDKTNGANIVTIAGGHLLDAMAFLLGEFTTLHAHTSMLFPKPVLCDTDGNLKTGQFNDSPDTFTMHGKIGISEVPVSVCMYSHPPTTPNLFQWVITGEKGSLKMEGPSLMIHAIPPKLMMTSFGSETVCWEEISLENTIVSGAEYQAWLDNDTERIVTLDEAVVRYRMVDAILRSAESGQCTSYRYD.

Positions 1-19 are cleaved as a signal peptide; sequence MSKRIRLGIVGLSADPSHC. Asparagine 330 is a glycosylation site (N-linked (GlcNAc...) asparagine).

Belongs to the Gfo/Idh/MocA family.

Its pathway is mycotoxin biosynthesis. Functionally, dehydrogenase; part of the gene cluster that mediates the biosynthesis of aspirochlorine (or antibiotic A30641), an unusual halogenated spiro compound with distinctive antifungal properties due to selective inhibition of protein biosynthesis, and which is also active against bacteria, viruses, and murine tumor cells. The non-ribosomal peptide synthetase (NRPS) aclP is responsible the formation of the diketopiperazine (DKP) core from the condensation of 2 phenylalanine residues. One Phe residue is tailored into chlorotyrosine by hydroxylation and chlorination, whereas the second Phe undergoes an unprecedented C-C bond cleavage to be converted into glycine. After formation of the DKP, sulfur is incorporated into the DKP by conjugation with glutathione by aclG, followed by its stepwise degradation to the thiol by aclI, aclJ and aclK, and the dithiol oxidation by aclT. In addition, oxygenases (aclB, aclC, aclL and aclO) and O-methyltransferases (aclM and aclU) act as tailoring enzymes to produce the intermediate dechloroaspirochlorine. Ultimately, chlorination of dechloroaspirochlorine by the halogenase aclH is the last step in the aspirochlorine pathway. The polypeptide is Dehydrogenase aclE (Aspergillus oryzae (strain ATCC 42149 / RIB 40) (Yellow koji mold)).